The chain runs to 208 residues: MANNTRARRTARLSRALGIALTPKAAKYMERRPYGPGEHGRARKKQDSDYAVRLREKQRLRAQYGIREAQMTRAFEEARRTKGLTGENLIELLEMRLDALVLRAGFARTIAQARQLVVHRHILVDGIRVDRPSFRVGEGQLVHVHSRSETMPPFQVAAAGAHRDVLPQVPAYLDVKLDALQARLVRRPKRSEVPVTCEEQLVVEFYAR.

Residues 28-48 are disordered; the sequence is YMERRPYGPGEHGRARKKQDS. The 66-residue stretch at 95-160 folds into the S4 RNA-binding domain; sequence MRLDALVLRA…MPPFQVAAAG (66 aa).

This sequence belongs to the universal ribosomal protein uS4 family. As to quaternary structure, part of the 30S ribosomal subunit. Contacts protein S5. The interaction surface between S4 and S5 is involved in control of translational fidelity.

One of the primary rRNA binding proteins, it binds directly to 16S rRNA where it nucleates assembly of the body of the 30S subunit. Its function is as follows. With S5 and S12 plays an important role in translational accuracy. The chain is Small ribosomal subunit protein uS4 from Arthrobacter sp. (strain FB24).